A 400-amino-acid polypeptide reads, in one-letter code: Capsid protein (400 aa).

Residues 1 to 10 (MDPNLDQDTL) show a composition bias toward polar residues. The disordered stretch occupies residues 1–54 (MDPNLDQDTLPTHEEIDNDVDSAEEEPPEPPLLPDDIDDDDSHGSRTRRQVKPP). A compositionally biased stretch (acidic residues) spans 16-28 (IDNDVDSAEEEPP).

The protein belongs to the potexvirus capsid protein family.

The protein resides in the virion. In terms of biological role, required for genome encapsidation. The protein is Capsid protein (ORF3) of Botryotinia fuckeliana (Noble rot fungus).